The following is a 371-amino-acid chain: ETS-related transcription factor Elf-3 (371 aa).

One can recognise a PNT domain in the interval 46 to 132; the sequence is NPQMSLEGTE…AQLRDLTSSS (87 aa). The short motif at 137–145 is the 9aaTAD element; it reads SWIIELLEK. Residues 173-251 are disordered; sequence GQQASPYHPG…HGKRKRGRPR (79 aa). The span at 181-216 shows a compositional bias: low complexity; the sequence is PGSCGAGAPSPGSSDVSTAGTGASRSSHSSDSGGSD. The span at 231–241 shows a compositional bias: basic and acidic residues; the sequence is GFRDCKKGDPK. Over residues 242-251 the composition is skewed to basic residues; sequence HGKRKRGRPR. Residues 273 to 355 constitute a DNA-binding region (ETS); it reads THLWEFIRDI…DGRRLVYKFG (83 aa).

Belongs to the ETS family. In terms of assembly, interacts with TBP. Interacts with CREBBP and EP300; these act as transcriptional coactivators of ELF3 and positively modulate its function. Interacts with XRCC5/KU86 and XRCC6/KU70; these inhibit the ability of ELF3 to bind DNA and negatively modulate its transcriptional activity. Associated with CLND7 and POU2F3. Interacts with ZNF768. As to expression, expressed exclusively in tissues containing a high content of terminally differentiated epithelial cells including mammary gland, colon, trachea, kidney, prostate, uterus, stomach and skin.

It is found in the cytoplasm. Its subcellular location is the nucleus. Transcriptional activator that binds and transactivates ETS sequences containing the consensus nucleotide core sequence GGA[AT]. Acts synergistically with POU2F3 to transactivate the SPRR2A promoter and with RUNX1 to transactivate the ANGPT1 promoter. Also transactivates collagenase, CCL20, CLND7, FLG, KRT8, NOS2, PTGS2, SPRR2B, TGFBR2 and TGM3 promoters. Represses KRT4 promoter activity. Involved in mediating vascular inflammation. May play an important role in epithelial cell differentiation and tumorigenesis. May be a critical downstream effector of the ERBB2 signaling pathway. May be associated with mammary gland development and involution. Plays an important role in the regulation of transcription with TATA-less promoters in preimplantation embryos, which is essential in preimplantation development. This Homo sapiens (Human) protein is ETS-related transcription factor Elf-3.